Reading from the N-terminus, the 234-residue chain is Ribosome-inactivating protein lychnin (234 aa).

Residues cysteine 32 and cysteine 115 are joined by a disulfide bond. Glutamate 170 is a catalytic residue.

As to quaternary structure, monomer.

It carries out the reaction Endohydrolysis of the N-glycosidic bond at one specific adenosine on the 28S rRNA.. Its function is as follows. Ribosome-inactivating protein of type 1, inhibits protein synthesis in animal cells. Inhibits cell-free translation in rabbit reticulocyte lysate system with an IC(50) of 0.17 nM. This Silene chalcedonica (Maltese-cross) protein is Ribosome-inactivating protein lychnin.